The sequence spans 383 residues: Deoxyguanosinetriphosphate triphosphohydrolase-like protein (383 aa).

Residues 62–198 (RLTHSLEVST…ASLADDISYI (137 aa)) form the HD domain.

The protein belongs to the dGTPase family. Type 2 subfamily.

This is Deoxyguanosinetriphosphate triphosphohydrolase-like protein from Rickettsia prowazekii (strain Madrid E).